The following is a 579-amino-acid chain: Cytochrome P450 monooxygenase ORF6 (579 aa).

Residue Asn-2 is glycosylated (N-linked (GlcNAc...) asparagine). A helical transmembrane segment spans residues 7 to 29 (PLGSFVGTTLLLFILYKLVKLAY). 2 N-linked (GlcNAc...) asparagine glycosylation sites follow: Asn-194 and Asn-390. Cys-512 is a heme binding site.

Belongs to the cytochrome P450 family. Requires heme as cofactor.

The protein localises to the membrane. It participates in sesquiterpene biosynthesis. Its function is as follows. Cytochrome P450 monooxygenase; part of the gene cluster that mediates the biosynthesis of PR-toxin, a bicyclic sesquiterpene belonging to the eremophilane class and acting as a mycotoxin. The first step of the pathway is catalyzed by the aristolochene synthase which performs the cyclization of trans,trans-farnesyl diphosphate (FPP) to the bicyclic sesquiterpene aristolochene. Following the formation of aristolochene, the non-oxygenated aristolochene is converted to the trioxygenated intermediate eremofortin B, via 7-epi-neopetasone. This conversion appears to involve three enzymes, a hydroxysterol oxidase-like enzyme, the quinone-oxidase prx3 that forms the quinone-type-structure in the bicyclic nucleus of aristolochene with the C8-oxo group and the C-3 hydroxyl group, and the P450 monooxygenase ORF6 that introduces the epoxide at the double bond between carbons 1 and 2. No monoxy or dioxy-intermediates have been reported to be released to the broth, so these three early oxidative reactions may be coupled together. Eremofortin B is further oxidized by another P450 monooxygenase, that introduces a second epoxide between carbons 7 and 11 prior to acetylation to eremofortin A by the acetyltransferase ORF8. The second epoxidation may be performed by a second P450 monooxygenase. After the acetylation step, eremofortin A is converted to eremofortin C and then to PR-toxin. First the conversion of eremofortin A to eremofortin C proceeds by oxidation of the side chain of the molecule at C-12 and is catalyzed by the short-chain oxidoreductase prx1. The cytochrome P450 monooxygenase ORF6 is probably also involved in this step. The primary alcohol formed at C-12 is finally oxidized by the short-chain alcohol dehydrogenase prx4 that forms PR-toxin. In Penicillium roqueforti (strain FM164), this protein is Cytochrome P450 monooxygenase ORF6.